Reading from the N-terminus, the 705-residue chain is Elongation factor G (705 aa).

In terms of domain architecture, tr-type G spans 8 to 290 (AYYRNIGISA…AVIEYLPAPT (283 aa)). GTP-binding positions include 17 to 24 (AHIDAGKT), 88 to 92 (DTPGH), and 142 to 145 (NKMD).

The protein belongs to the TRAFAC class translation factor GTPase superfamily. Classic translation factor GTPase family. EF-G/EF-2 subfamily.

The protein localises to the cytoplasm. Its function is as follows. Catalyzes the GTP-dependent ribosomal translocation step during translation elongation. During this step, the ribosome changes from the pre-translocational (PRE) to the post-translocational (POST) state as the newly formed A-site-bound peptidyl-tRNA and P-site-bound deacylated tRNA move to the P and E sites, respectively. Catalyzes the coordinated movement of the two tRNA molecules, the mRNA and conformational changes in the ribosome. In Baumannia cicadellinicola subsp. Homalodisca coagulata, this protein is Elongation factor G.